The following is a 76-amino-acid chain: Kappa-actitoxin-Avd4l (76 aa).

The first 19 residues, 1 to 19, serve as a signal peptide directing secretion; the sequence is MNKALFLCLVVLCAAVVFA. Residues 20 to 31 constitute a propeptide that is removed on maturation; that stretch reads AEDLQKAKHAPF. 3 disulfides stabilise this stretch: Cys37/Cys72, Cys39/Cys65, and Cys55/Cys73.

The protein belongs to the sea anemone type 3 (BDS) potassium channel toxin family. In terms of tissue distribution, weakly expressed in the ectodermal tissue from the distal and proximal tentacles, body wall, and oral disk.

The protein resides in the secreted. The protein localises to the nematocyst. Its function is as follows. Blocks Kv3 voltage-gated potassium channels. Reduces blood pressure. This is Kappa-actitoxin-Avd4l from Anemonia viridis (Snakelocks anemone).